The chain runs to 220 residues: Ribosomal RNA large subunit methyltransferase E (220 aa).

Gly-60, Trp-62, Asp-92, Asp-108, and Asp-133 together coordinate S-adenosyl-L-methionine. The active-site Proton acceptor is the Lys-173. Positions 195–220 are disordered; the sequence is APRKPKASRDKSSETFILGRHLKRPR.

Belongs to the class I-like SAM-binding methyltransferase superfamily. RNA methyltransferase RlmE family.

The protein localises to the cytoplasm. The catalysed reaction is uridine(2552) in 23S rRNA + S-adenosyl-L-methionine = 2'-O-methyluridine(2552) in 23S rRNA + S-adenosyl-L-homocysteine + H(+). Specifically methylates the uridine in position 2552 of 23S rRNA at the 2'-O position of the ribose in the fully assembled 50S ribosomal subunit. The chain is Ribosomal RNA large subunit methyltransferase E from Burkholderia lata (strain ATCC 17760 / DSM 23089 / LMG 22485 / NCIMB 9086 / R18194 / 383).